A 458-amino-acid chain; its full sequence is Glycine--tRNA ligase (458 aa).

Substrate contacts are provided by R97 and E171. ATP is bound by residues 203-205, 213-218, 287-288, and 331-334; these read RNE, FRTREF, EL, and GADR. 218–222 provides a ligand contact to substrate; sequence FEQME. 327–331 contributes to the substrate binding site; the sequence is EPSLG.

It belongs to the class-II aminoacyl-tRNA synthetase family. Homodimer.

It is found in the cytoplasm. It carries out the reaction tRNA(Gly) + glycine + ATP = glycyl-tRNA(Gly) + AMP + diphosphate. Catalyzes the attachment of glycine to tRNA(Gly). This Bacillus anthracis protein is Glycine--tRNA ligase.